The following is a 218-amino-acid chain: tRNA (guanine-N(7)-)-methyltransferase (218 aa).

The S-adenosyl-L-methionine site is built by Glu-45, Glu-70, Asp-97, and Asp-119. Asp-119 is a catalytic residue. Residue Lys-123 coordinates substrate. Residues 125 to 130 are interaction with RNA; that stretch reads RHEKRR. Residues Asp-155 and 195–198 contribute to the substrate site; that span reads TEYE.

The protein belongs to the class I-like SAM-binding methyltransferase superfamily. TrmB family.

It catalyses the reaction guanosine(46) in tRNA + S-adenosyl-L-methionine = N(7)-methylguanosine(46) in tRNA + S-adenosyl-L-homocysteine. The protein operates within tRNA modification; N(7)-methylguanine-tRNA biosynthesis. Its function is as follows. Catalyzes the formation of N(7)-methylguanine at position 46 (m7G46) in tRNA. The chain is tRNA (guanine-N(7)-)-methyltransferase from Lactobacillus acidophilus (strain ATCC 700396 / NCK56 / N2 / NCFM).